The chain runs to 1004 residues: Glutamate [NMDA] receptor subunit 1 (1004 aa).

The N-terminal stretch at 1-39 (MAGTDSPAAARFVYRCLLFAPAIVVGLLLPLTLPPIAAA) is a signal peptide. Topologically, residues 40-585 (QRHTASDNPS…TLVSFLQPFS (546 aa)) are extracellular. Residues Asn270, Asn326, Asn357, Asn409, Asn466, Asn493, and Asn513 are each glycosylated (N-linked (GlcNAc...) asparagine). Residues 542-544 (PLT) and Arg549 each bind glycine. The chain crosses the membrane as a helical span at residues 586–606 (NTLWILVMVSVHVVALVLYLL). At 607-663 (DRFSPFGRFKLSHSDSNEEKALNLSSAVWFAWGVLLNSGIGEGTPRSFSARVLGMVW) the chain is on the cytoplasmic side. Residues 664 to 684 (AGFAMIIVASYTANLAAFLVL) form a helical membrane-spanning segment. Topologically, residues 685–843 (ERPKTKLSGI…KTPNTLGLKN (159 aa)) are extracellular. N-linked (GlcNAc...) asparagine glycosylation is present at Asn705. 2 residues coordinate glycine: Ser715 and Asp759. A helical membrane pass occupies residues 844-864 (MAGVFILVGVGIAGGVGLIII). The Cytoplasmic portion of the chain corresponds to 865-1004 (EVIYKKHQVK…YTSDVSHLVV (140 aa)). The interval 980 to 1004 (TRPQQNILPPRYSPGYTSDVSHLVV) is disordered. Residues 994-1004 (GYTSDVSHLVV) are compositionally biased toward polar residues.

It belongs to the glutamate-gated ion channel (TC 1.A.10.1) family. In terms of assembly, forms a heteromeric NMDA channel with Nmdar2.

Its subcellular location is the cell membrane. The protein resides in the postsynaptic cell membrane. It localises to the postsynaptic density. Its function is as follows. NMDA receptor subtype of glutamate-gated ion channels with high calcium permeability and voltage-dependent sensitivity to magnesium. Mediated by glycine. This protein plays a key role in synaptic plasticity, synaptogenesis, excitotoxicity, memory acquisition and learning. It mediates neuronal functions in glutamate neurotransmission. Is involved in the cell surface targeting of NMDA receptors. Plays a role in associative learning and in long-term memory consolidation. The chain is Glutamate [NMDA] receptor subunit 1 from Drosophila pseudoobscura pseudoobscura (Fruit fly).